The following is a 545-amino-acid chain: Sulfite oxidase, mitochondrial (545 aa).

The N-terminal 79 residues, 1–79 (MLLLHRAVVL…YQDHRCRAAQ (79 aa)), are a transit peptide targeting the mitochondrion. A Cytochrome b5 heme-binding domain is found at 82-161 (TRIYTKEEVS…LAQYKVGELN (80 aa)). H118 is a binding site for heme b. Position 123 is a phosphoserine (S123). Residues H143, Q145, and H147 each coordinate heme b. The interval 165-174 (KVAPTVETSD) is hinge. Residues 175–401 (PYADDPVRHP…YSHWQRRDYK (227 aa)) form a moco domain region. Residues 215–219 (FTRNH), C264, D322, H361, R366, and 377–379 (HVK) contribute to the Mo-molybdopterin site. The interval 402–538 (GFSPSVDWDT…RGVLSNAWHR (137 aa)) is homodimerization.

Homodimer. Requires heme b as cofactor. The cofactor is Mo-molybdopterin.

The protein localises to the mitochondrion intermembrane space. It carries out the reaction sulfite + O2 + H2O = sulfate + H2O2. It participates in energy metabolism; sulfur metabolism. In terms of biological role, catalyzes the oxidation of sulfite to sulfate, the terminal reaction in the oxidative degradation of sulfur-containing amino acids. This is Sulfite oxidase, mitochondrial (SUOX) from Macaca fascicularis (Crab-eating macaque).